Consider the following 346-residue polypeptide: Porphobilinogen deaminase (346 aa).

Cys242 is modified (S-(dipyrrolylmethanemethyl)cysteine). Residues 317-346 are disordered; that stretch reads ATEPGARSGTGAVRPPETDLSNPSPMENPQ. Polar residues predominate over residues 335–346; it reads DLSNPSPMENPQ.

It belongs to the HMBS family. In terms of assembly, monomer. The cofactor is dipyrromethane.

The catalysed reaction is 4 porphobilinogen + H2O = hydroxymethylbilane + 4 NH4(+). It functions in the pathway porphyrin-containing compound metabolism; protoporphyrin-IX biosynthesis; coproporphyrinogen-III from 5-aminolevulinate: step 2/4. Functionally, tetrapolymerization of the monopyrrole PBG into the hydroxymethylbilane pre-uroporphyrinogen in several discrete steps. In Nocardia farcinica (strain IFM 10152), this protein is Porphobilinogen deaminase.